A 736-amino-acid polypeptide reads, in one-letter code: MTRQSTVDQNQSTYNAKNFITKERQESKLDIDQLNVFLENGEQEAKLTHDLIEEIINDPILKTDTDHYDITKSQEREITARRIARLSLYMEHDVKTKQREFKDDLVKNLERKDSKLLTNKDLSIFDRRLSLVANIDPGLSTRIGVHLGLFGNCIKGNGTDEQIHYWLQEKGALLLKGIYGCFAMTELGHGSNVAQLQTTATYDPSSDTFKINTPDLLATKWWIGGAAHSATHTTAYARLIVNGKDYGVKTFVVPLRDEKTLNLLPGIMIGDIGAKMGRDGIDNGWIQFKNVVIPRQFMLQRFTKVIPGSPPKVQTQPLLDQISGYSALLSGRVNMVMDSFRFGSKFAIIATRYAVGRQQFGPEGNETQLIDYPLHQYRVLPQLALCYLVAPTAHKLMGTYISTLMELHQAGADKAKLINVSNKLKDLFIDSASLKATNTWLVAKLIDDLRQTCGGHGYSSYNGFGKGYNDWVVQCTWEGDNNILSLTSAKSIVKKFADISRGKNTTVTTDSLKYLTPQFIGKSLSKDLTFKFDNKKDFTEIWAVMIIRLIHHVVELISKGTKIDSLSKTLVQISKFHAIHSMLLTYQDKLNNESEASVKDAYTKGYLWKLYELFSLYFIDQHLGEFLLLKVVTSDQMSQVLQPRLLQLLPEIRKECIALTDAFKLPDAMINAPIGYYDGDIYHNYFNEVTNNNKLEPDGAGRPPYYPLLTSMLGRDDFQNRLGGSFESETLDSLLK.

It belongs to the acyl-CoA oxidase family. It depends on FAD as a cofactor.

The protein localises to the peroxisome. The catalysed reaction is a 2,3-saturated acyl-CoA + O2 = a (2E)-enoyl-CoA + H2O2. The protein operates within lipid metabolism; peroxisomal fatty acid beta-oxidation. The protein is Acyl-coenzyme A oxidase (POX1) of Kluyveromyces lactis (strain ATCC 8585 / CBS 2359 / DSM 70799 / NBRC 1267 / NRRL Y-1140 / WM37) (Yeast).